A 96-amino-acid polypeptide reads, in one-letter code: uncharacterized protein (96 aa).

This is an uncharacterized protein from Sulfolobus islandicus filamentous virus (isolate Iceland/Hveragerdi) (SIFV).